The chain runs to 368 residues: F-box only protein 28 (368 aa).

Basic and acidic residues predominate over residues 1 to 11 (MAAASEERMAE). The interval 1–57 (MAAASEERMAEEGGGGHGDGGSPSAIASTQRLPPPPPPQPPQPGSQAPPAPALAPDQ) is disordered. A compositionally biased stretch (gly residues) spans 12–21 (EGGGGHGDGG). The span at 32 to 52 (LPPPPPPQPPQPGSQAPPAPA) shows a compositional bias: pro residues. The F-box domain occupies 61–109 (NNTLVALPIVAIENILSFMSYDEISQLRLVCKRMDLVCQRMLNQGFLKV). Phosphoserine is present on residues Ser-235 and Ser-242. Thr-270 carries the post-translational modification Phosphothreonine. Positions 328–368 (MESAVGNSSGSGQSEESPRKRKKAAEAIDSLRKSKRLRNRK) are disordered. The residue at position 344 (Ser-344) is a Phosphoserine.

Part of a SCF (SKP1-cullin-F-box) protein ligase complex.

It localises to the chromosome. The protein resides in the centromere. Its subcellular location is the kinetochore. In terms of biological role, probably recognizes and binds to some phosphorylated proteins and promotes their ubiquitination and degradation. In Bos taurus (Bovine), this protein is F-box only protein 28 (FBXO28).